Here is a 469-residue protein sequence, read N- to C-terminus: Neuraminidase (469 aa).

At 1–9 (MNPNQKIIT) the chain is on the intravirion side. The chain crosses the membrane as a helical span at residues 10 to 30 (IGSVSLTIATICFLMQIAILV). The involved in apical transport and lipid raft association stretch occupies residues 11 to 33 (GSVSLTIATICFLMQIAILVTTV). Residues 31 to 469 (TTVTLHFKQY…DGADINLMPI (439 aa)) are Virion surface-facing. The hypervariable stalk region stretch occupies residues 36-88 (HFKQYECDSPANNQVMPCEPIIIERNITEIVYLTNTTIEKEICPKLVEYRNWS). N-linked (GlcNAc...) asparagine; by host glycans are attached at residues asparagine 61, asparagine 70, and asparagine 86. The segment at 91-469 (QCKITGFAPF…DGADINLMPI (379 aa)) is head of neuraminidase. 8 disulfides stabilise this stretch: cysteine 92/cysteine 417, cysteine 124/cysteine 129, cysteine 183/cysteine 230, cysteine 232/cysteine 237, cysteine 278/cysteine 291, cysteine 280/cysteine 289, cysteine 318/cysteine 337, and cysteine 421/cysteine 447. Arginine 118 provides a ligand contact to substrate. Asparagine 146 carries an N-linked (GlcNAc...) asparagine; by host glycan. The Proton donor/acceptor role is filled by aspartate 151. Residue arginine 152 coordinates substrate. N-linked (GlcNAc...) asparagine; by host glycans are attached at residues asparagine 200 and asparagine 234. 276 to 277 (EE) provides a ligand contact to substrate. Residue arginine 292 participates in substrate binding. Ca(2+) is bound by residues aspartate 293, glycine 297, and aspartate 324. Arginine 371 provides a ligand contact to substrate. Residue asparagine 402 is glycosylated (N-linked (GlcNAc...) asparagine; by host). Tyrosine 406 acts as the Nucleophile in catalysis.

This sequence belongs to the glycosyl hydrolase 34 family. In terms of assembly, homotetramer. The cofactor is Ca(2+). N-glycosylated.

The protein localises to the virion membrane. It localises to the host apical cell membrane. The catalysed reaction is Hydrolysis of alpha-(2-&gt;3)-, alpha-(2-&gt;6)-, alpha-(2-&gt;8)- glycosidic linkages of terminal sialic acid residues in oligosaccharides, glycoproteins, glycolipids, colominic acid and synthetic substrates.. Inhibited by the neuraminidase inhibitors zanamivir (Relenza) and oseltamivir (Tamiflu). These drugs interfere with the release of progeny virus from infected cells and are effective against all influenza strains. Resistance to neuraminidase inhibitors is quite rare. Catalyzes the removal of terminal sialic acid residues from viral and cellular glycoconjugates. Cleaves off the terminal sialic acids on the glycosylated HA during virus budding to facilitate virus release. Additionally helps virus spread through the circulation by further removing sialic acids from the cell surface. These cleavages prevent self-aggregation and ensure the efficient spread of the progeny virus from cell to cell. Otherwise, infection would be limited to one round of replication. Described as a receptor-destroying enzyme because it cleaves a terminal sialic acid from the cellular receptors. May facilitate viral invasion of the upper airways by cleaving the sialic acid moieties on the mucin of the airway epithelial cells. Likely to plays a role in the budding process through its association with lipid rafts during intracellular transport. May additionally display a raft-association independent effect on budding. Plays a role in the determination of host range restriction on replication and virulence. Sialidase activity in late endosome/lysosome traffic seems to enhance virus replication. The chain is Neuraminidase from Influenza A virus (strain A/Udorn/307/1972 H3N2).